Here is a 635-residue protein sequence, read N- to C-terminus: 1-deoxy-D-xylulose-5-phosphate synthase (635 aa).

Residues H79 and 120 to 122 (GHS) each bind thiamine diphosphate. D151 is a binding site for Mg(2+). Residues 152-153 (GA), N182, Y291, and E372 each bind thiamine diphosphate. N182 contributes to the Mg(2+) binding site.

This sequence belongs to the transketolase family. DXPS subfamily. As to quaternary structure, homodimer. Mg(2+) serves as cofactor. The cofactor is thiamine diphosphate.

It catalyses the reaction D-glyceraldehyde 3-phosphate + pyruvate + H(+) = 1-deoxy-D-xylulose 5-phosphate + CO2. It functions in the pathway metabolic intermediate biosynthesis; 1-deoxy-D-xylulose 5-phosphate biosynthesis; 1-deoxy-D-xylulose 5-phosphate from D-glyceraldehyde 3-phosphate and pyruvate: step 1/1. Catalyzes the acyloin condensation reaction between C atoms 2 and 3 of pyruvate and glyceraldehyde 3-phosphate to yield 1-deoxy-D-xylulose-5-phosphate (DXP). This Xylella fastidiosa (strain M12) protein is 1-deoxy-D-xylulose-5-phosphate synthase.